We begin with the raw amino-acid sequence, 351 residues long: Dihydroorotate dehydrogenase (quinone) (351 aa).

Residues 61-65 (AGLDK) and Thr85 each bind FMN. Lys65 provides a ligand contact to substrate. 110–114 (NRMGF) contributes to the substrate binding site. Asn139 and Asn172 together coordinate FMN. Position 172 (Asn172) interacts with substrate. Ser175 acts as the Nucleophile in catalysis. Asn177 contributes to the substrate binding site. Lys217 and Thr245 together coordinate FMN. 246–247 (NT) provides a ligand contact to substrate. Residues Gly268, Gly297, and 318 to 319 (YT) contribute to the FMN site.

This sequence belongs to the dihydroorotate dehydrogenase family. Type 2 subfamily. As to quaternary structure, monomer. FMN is required as a cofactor.

The protein resides in the cell membrane. The catalysed reaction is (S)-dihydroorotate + a quinone = orotate + a quinol. It participates in pyrimidine metabolism; UMP biosynthesis via de novo pathway; orotate from (S)-dihydroorotate (quinone route): step 1/1. Its function is as follows. Catalyzes the conversion of dihydroorotate to orotate with quinone as electron acceptor. This is Dihydroorotate dehydrogenase (quinone) from Xylella fastidiosa (strain 9a5c).